The primary structure comprises 463 residues: Chromosomal replication initiator protein DnaA (463 aa).

The segment at 1–84 is domain I, interacts with DnaA modulators; sequence MNTNQIILTN…QLFQHYNNAI (84 aa). Residues 84 to 124 are domain II; that stretch reads IKTVEIITKELPASNQATLELPTKTFADIGSSELNSENIFS. Residues 125–343 are domain III, AAA+ region; sequence TFDIRFTFDN…GALNKVIAHS (219 aa). Residues G171, G173, K174, and T175 each coordinate ATP. The interval 344 to 463 is domain IV, binds dsDNA; that stretch reads NFTAKEITLE…INLMMKILQN (120 aa).

This sequence belongs to the DnaA family. In terms of assembly, oligomerizes as a right-handed, spiral filament on DNA at oriC.

It is found in the cytoplasm. In terms of biological role, plays an essential role in the initiation and regulation of chromosomal replication. ATP-DnaA binds to the origin of replication (oriC) to initiate formation of the DNA replication initiation complex once per cell cycle. Binds the DnaA box (a 9 base pair repeat at the origin) and separates the double-stranded (ds)DNA. Forms a right-handed helical filament on oriC DNA; dsDNA binds to the exterior of the filament while single-stranded (ss)DNA is stabiized in the filament's interior. The ATP-DnaA-oriC complex binds and stabilizes one strand of the AT-rich DNA unwinding element (DUE), permitting loading of DNA polymerase. After initiation quickly degrades to an ADP-DnaA complex that is not apt for DNA replication. Binds acidic phospholipids. The chain is Chromosomal replication initiator protein DnaA from Rickettsia bellii (strain OSU 85-389).